The primary structure comprises 413 residues: uncharacterized protein (413 aa).

Disordered regions lie at residues Glu108–Ser158 and Asp232–Ala257. A Phosphoserine modification is found at Ser115. The span at Ser127–His139 shows a compositional bias: polar residues. Ser141 carries the post-translational modification Phosphoserine. Lys239 is covalently cross-linked (Glycyl lysine isopeptide (Lys-Gly) (interchain with G-Cter in SUMO2)). Phosphoserine occurs at positions 269 and 296. The segment at Arg290 to Asp336 is disordered. Over residues Thr302–Pro318 the composition is skewed to low complexity. The residue at position 342 (Ser342) is a Phosphoserine.

This is an uncharacterized protein from Mus musculus (Mouse).